We begin with the raw amino-acid sequence, 417 residues long: RH-like protein ID (417 aa).

A run of 11 helical transmembrane segments spans residues 12-32 (CLPL…YFFT), 44-64 (LVAS…GFGF), 77-97 (VAFN…LDGF), 125-145 (ISAG…MVLV), 172-192 (IYVF…KPLA), 203-223 (TIPS…WPSF), 238-258 (VFNT…VSSL), 265-285 (INMT…ATSC), 287-307 (LIPS…ISIG), 331-351 (NFSL…VLDT), and 358-378 (MVGF…VIAL).

It belongs to the ammonium transporter (TC 2.A.49) family. Rh subfamily.

Its subcellular location is the membrane. In terms of biological role, may be part of an oligomeric complex which is likely to have a transport or channel function in the erythrocyte membrane. This Gorilla gorilla gorilla (Western lowland gorilla) protein is RH-like protein ID.